We begin with the raw amino-acid sequence, 715 residues long: Polyribonucleotide nucleotidyltransferase (715 aa).

Residues aspartate 488 and aspartate 494 each contribute to the Mg(2+) site. One can recognise a KH domain in the interval 555 to 614 (PRIEVMHIPTDKIRDVIGSGGKVIREIVEKTGAKINIEDDGTVKIASSNAKEIEAAKKWI). An S1 motif domain is found at 624-692 (GEIYEGTVVK…ERGKVRLSMK (69 aa)).

Belongs to the polyribonucleotide nucleotidyltransferase family. Mg(2+) is required as a cofactor.

Its subcellular location is the cytoplasm. It carries out the reaction RNA(n+1) + phosphate = RNA(n) + a ribonucleoside 5'-diphosphate. Involved in mRNA degradation. Catalyzes the phosphorolysis of single-stranded polyribonucleotides processively in the 3'- to 5'-direction. This chain is Polyribonucleotide nucleotidyltransferase, found in Mesorhizobium japonicum (strain LMG 29417 / CECT 9101 / MAFF 303099) (Mesorhizobium loti (strain MAFF 303099)).